The sequence spans 204 residues: Ras-related protein Rab-7L1 (204 aa).

GTP contacts are provided by Ser33, Lys34, His35, Tyr36, Lys37, and Thr39. An Effector region motif is present at residues 36–44 (YKSTVGVDF). At Thr71 the chain carries Phosphothreonine; by LRRK2. Ser72 carries the post-translational modification Phosphoserine. Positions 126, 156, and 157 each coordinate GTP. Residues Cys203 and Cys204 are each lipidated (S-geranylgeranyl cysteine).

This sequence belongs to the small GTPase superfamily. Rab family. In terms of assembly, interacts with LRRK2 (via the N-terminus); this interaction is direct and stimulates kinase activity.

It is found in the cell membrane. The protein localises to the cytoplasm. The protein resides in the perinuclear region. It localises to the golgi apparatus. Its subcellular location is the golgi apparatus membrane. It is found in the trans-Golgi network. The protein localises to the cytoskeleton. Functionally, the small GTPases Rab are key regulators in vesicle trafficking. Essential for maintaining the integrity of endosome-trans-Golgi network structure. Together with LRRK2, plays a role in the retrograde trafficking pathway for recycling proteins, such as mannose 6 phosphate receptor (M6PR), between lysosomes and the Golgi apparatus in a retromer-dependent manner. Recruits LRRK2 to the Golgi apparatus and stimulates LRRK2 kinase activity. Stimulates phosphorylation of RAB10 'Thr-73' by LRRK2. Also regulates neuronal process morphology in the intact central nervous system (CNS). This Mus musculus (Mouse) protein is Ras-related protein Rab-7L1 (Rab29).